Here is a 224-residue protein sequence, read N- to C-terminus: Flagellar L-ring protein (224 aa).

The first 15 residues, 1 to 15, serve as a signal peptide directing secretion; that stretch reads MRSLLFSLTALVLAG. C16 is lipidated: N-palmitoyl cysteine. C16 carries S-diacylglycerol cysteine lipidation.

It belongs to the FlgH family. As to quaternary structure, the basal body constitutes a major portion of the flagellar organelle and consists of four rings (L,P,S, and M) mounted on a central rod.

Its subcellular location is the cell outer membrane. The protein localises to the bacterial flagellum basal body. Assembles around the rod to form the L-ring and probably protects the motor/basal body from shearing forces during rotation. The chain is Flagellar L-ring protein from Idiomarina loihiensis (strain ATCC BAA-735 / DSM 15497 / L2-TR).